The following is a 30-amino-acid chain: GLFKTLIKGAGKMLGHVAKEFLGSEGEPES.

Expressed by the skin glands.

The protein localises to the secreted. In terms of biological role, has antimicrobial activity. The sequence is that of Dermaseptin-3.4TR from Phyllomedusa trinitatis (Trinidad leaf frog).